A 160-amino-acid polypeptide reads, in one-letter code: SsrA-binding protein (160 aa).

It belongs to the SmpB family.

It is found in the cytoplasm. Functionally, required for rescue of stalled ribosomes mediated by trans-translation. Binds to transfer-messenger RNA (tmRNA), required for stable association of tmRNA with ribosomes. tmRNA and SmpB together mimic tRNA shape, replacing the anticodon stem-loop with SmpB. tmRNA is encoded by the ssrA gene; the 2 termini fold to resemble tRNA(Ala) and it encodes a 'tag peptide', a short internal open reading frame. During trans-translation Ala-aminoacylated tmRNA acts like a tRNA, entering the A-site of stalled ribosomes, displacing the stalled mRNA. The ribosome then switches to translate the ORF on the tmRNA; the nascent peptide is terminated with the 'tag peptide' encoded by the tmRNA and targeted for degradation. The ribosome is freed to recommence translation, which seems to be the essential function of trans-translation. The polypeptide is SsrA-binding protein (Enterobacter sp. (strain 638)).